Here is an 82-residue protein sequence, read N- to C-terminus: Putative antimicrobial peptide 7848 (82 aa).

Positions 1–17 are cleaved as a signal peptide; sequence MNENLWAAPAPKKLSKH. Residues 16–60 form a disordered region; the sequence is KHFFGRGGPLGKETGPNLFPKKPGAGKGLGFPPTKKPRGQPRVLK. The propeptide occupies 38–82; sequence PGAGKGLGFPPTKKPRGQPRVLKKPKWNSEGLIGILHRGSDGVQF. The span at 50–60 shows a compositional bias: basic residues; sequence KKPRGQPRVLK.

Belongs to the non-disulfide-bridged peptide (NDBP) superfamily. Short antimicrobial peptide (group 4) family. In terms of tissue distribution, expressed by the venom gland.

It is found in the secreted. The sequence is that of Putative antimicrobial peptide 7848 from Urodacus yaschenkoi (Inland robust scorpion).